The chain runs to 243 residues: MIIIPAIDLKNGCCVRLEQGLMEKDTVFNDDPGAQAVEWQRQGGEILHIVDLDGAFAGEPKNRSAIEAIVKSVTIPTQLGGGIRDIATIEAYLSLGIGRVIIGTAAQRNPAFVKEACAKFPGKIVVGIDAKNGMVAVQGWAEVTGITATELARQFEGDGVSAIIYTDISRDGMMQGPNIQATKALAEAIKIPVIASGGLSSLQDIENLIAIESSGVTGVITGKAIYSGAINLAEAIALTKKQR.

Asp-8 (proton acceptor) is an active-site residue. The active-site Proton donor is the Asp-129.

This sequence belongs to the HisA/HisF family.

It is found in the cytoplasm. It carries out the reaction 1-(5-phospho-beta-D-ribosyl)-5-[(5-phospho-beta-D-ribosylamino)methylideneamino]imidazole-4-carboxamide = 5-[(5-phospho-1-deoxy-D-ribulos-1-ylimino)methylamino]-1-(5-phospho-beta-D-ribosyl)imidazole-4-carboxamide. The protein operates within amino-acid biosynthesis; L-histidine biosynthesis; L-histidine from 5-phospho-alpha-D-ribose 1-diphosphate: step 4/9. The polypeptide is 1-(5-phosphoribosyl)-5-[(5-phosphoribosylamino)methylideneamino] imidazole-4-carboxamide isomerase (Geobacter sp. (strain M21)).